We begin with the raw amino-acid sequence, 271 residues long: Ribonuclease 3 (271 aa).

One can recognise an RNase III domain in the interval 5–139; it reads PALLELKLDY…IMAAIYLDGG (135 aa). Mg(2+) is bound at residue Glu-52. Residue Asp-56 is part of the active site. 2 residues coordinate Mg(2+): Asp-125 and Glu-128. Glu-128 is an active-site residue. The 70-residue stretch at 172–241 folds into the DRBM domain; it reads NFKSALQELA…ARGLYERLMG (70 aa). The tract at residues 241-271 is disordered; it reads GDPIVPLPDDSPGDSPDDSGDAAESGVISAT. Acidic residues predominate over residues 251–261; it reads SPGDSPDDSGD.

The protein belongs to the ribonuclease III family. In terms of assembly, homodimer. The cofactor is Mg(2+).

The protein localises to the cytoplasm. It carries out the reaction Endonucleolytic cleavage to 5'-phosphomonoester.. In terms of biological role, digests double-stranded RNA. Involved in the processing of primary rRNA transcript to yield the immediate precursors to the large and small rRNAs (23S and 16S). Processes some mRNAs, and tRNAs when they are encoded in the rRNA operon. Processes pre-crRNA and tracrRNA of type II CRISPR loci if present in the organism. The polypeptide is Ribonuclease 3 (Solibacter usitatus (strain Ellin6076)).